The chain runs to 579 residues: MSTDLLYEYFYPPTDLFKNTFEDVPPSPESLDVGDSLGSSPSYDLGFQPSFDIDFCIWKEGSSSPPPESNHLPEIVNKASTSPRGMPSPLTDSRSCHVCSSPTANTLHFGGRSCKACAAFFRRSVSMSMTYECIGTGDDTNPCRTHYELRMICRHCRFIKCLDAGMRRELVQARKEETRVAKRRSKGLVVSKKEDDDVESSYDEYVNTYTNVQDSSPKMESGINEMTIPESYLSPDPSSSQPLDMTVTPPPLHRSTPSILLTPATGDRMHCQRVLSNSPPFDIHQASTSHAGFIQHVQFYPVVEVENKIFELVDHYVRTEASLNDRRKIMYTDTQIRDVFDTTCECPYENHQLKPFNYKSFCGFVKHDFVMILDYVNQFPEFQALHKNDKNVVYRMACAVDSMLASAYYSYKVGIEKERLILFNGDYINMNPIPISGDEPGAGTEFQTPQEHEKYKTLMPLKLKQYFDLAIPFARLEVSFEEYVLLKALIIWQISNYRLLEEGRAICARQRDTIVQALHKVVEERGDEDPAIRVGQLLLSMSYITEQVQAMTNSYLVMTFFDVVSCDSIMYDLLSFRDD.

Residues 93 to 173 constitute a DNA-binding region (nuclear receptor); it reads SRSCHVCSSP…AGMRRELVQA (81 aa). NR C4-type zinc fingers lie at residues 96–117 and 133–161; these read CHVC…CKAC and CIGT…FIKC. Positions 233–242 are enriched in low complexity; it reads LSPDPSSSQP. Residues 233 to 256 are disordered; that stretch reads LSPDPSSSQPLDMTVTPPPLHRST. In terms of domain architecture, NR LBD spans 304-577; sequence EVENKIFELV…SIMYDLLSFR (274 aa).

It belongs to the nuclear hormone receptor family.

The protein localises to the nucleus. In terms of biological role, orphan nuclear receptor. The chain is Nuclear hormone receptor family member nhr-22 (nhr-22) from Caenorhabditis elegans.